The following is a 582-amino-acid chain: Semenogelin-2 (582 aa).

A signal peptide spans 1-23 (MKSIILFVLSLLLILEKQAAVMG). 3 disordered regions span residues 25-62 (KGGS…SKGS), 91-190 (HKTT…QGGS), and 272-553 (NLNQ…FSGA). A compositionally biased stretch (basic and acidic residues) spans 50–59 (GQKDKQHTES). Over residues 92–134 (KTTKSKQHLRRHQRLLNYKQKGRGRVKPKRHFHLIVIHRKGGQ) the composition is skewed to basic residues. 2 stretches are compositionally biased toward polar residues: residues 137 to 161 (HGTQ…QYSN) and 174 to 190 (EQAS…QGGS). The segment covering 293 to 305 (TEERQPNHEEKSV) has biased composition (basic and acidic residues). Polar residues predominate over residues 325 to 335 (KSQNQVTIPSQ). Over residues 336–345 (DQEHGHKENK) the composition is skewed to basic and acidic residues. Polar residues predominate over residues 385-395 (KSQNQVAIPSQ). Residues 396 to 405 (DQEHGHKENK) are compositionally biased toward basic and acidic residues. The segment covering 445–455 (KSQNQVTIPSQ) has biased composition (polar residues). The segment covering 456 to 465 (DQEHGHKENK) has biased composition (basic and acidic residues). Polar residues-rich tracts occupy residues 487 to 498 (KDVSQSSLSFQT) and 506 to 529 (SQIQ…NSGK). The segment covering 530–546 (SADRKQDLLSHEQEGRY) has biased composition (basic and acidic residues).

Belongs to the semenogelin family. In terms of assembly, interacts with SERPINA5.

The protein resides in the secreted. Functionally, participates in the formation of a gel matrix (sperm coagulum) entrapping the accessory gland secretions and ejaculated spermatozoa. The sequence is that of Semenogelin-2 (SEMG2) from Macaca fascicularis (Crab-eating macaque).